The sequence spans 85 residues: UPF0335 protein BARBAKC583_0130 (85 aa).

This sequence belongs to the UPF0335 family.

The chain is UPF0335 protein BARBAKC583_0130 from Bartonella bacilliformis (strain ATCC 35685 / KC583 / Herrer 020/F12,63).